We begin with the raw amino-acid sequence, 471 residues long: Vitellogenic carboxypeptidase (471 aa).

The first 19 residues, 1 to 19 (MVKFHLLVLIAFTCYTCSD), serve as a signal peptide directing secretion. N135 is a glycosylation site (N-linked (GlcNAc...) asparagine). Active-site residues include S207, D391, and H448.

It belongs to the peptidase S10 family. In terms of tissue distribution, synthesized in the fat body of vitellogenic females, secreted into the hemolymph and accumulates in yolk bodies of developing oocytes.

The protein localises to the secreted. May play a role in activating hydrolytic enzymes that are involved in the degradation of yolk proteins in developing embryos or may function as an exopeptidase in the degradation of vitellogenin. The protein is Vitellogenic carboxypeptidase (VCP) of Aedes aegypti (Yellowfever mosquito).